Here is a 302-residue protein sequence, read N- to C-terminus: Ribosome-binding factor PSRP1, chloroplastic (302 aa).

A chloroplast-targeting transit peptide spans 1–66; it reads MATLCTSAIN…SRNKPNVVCM (66 aa).

In terms of assembly, binds to the mRNA channel of the chloroplast small ribosomal subunit and interacts with 16S sRNA nucleotides at the A-site and P-site.

It localises to the plastid. The protein resides in the chloroplast stroma. Its function is as follows. Ribosome-binding factor involved in light- and temperature-dependent control of protein synthesis. Interacts with 16S sRNA nucleotides at the A-site and P-site, where it protects the decoding center and inhibits translation by preventing tRNA binding. Stabilizes 70S ribosomes against dissociation. May be recycled by the combined action of ribosome-recycling factor (RRF) and EF-G. The polypeptide is Ribosome-binding factor PSRP1, chloroplastic (PSRP1) (Spinacia oleracea (Spinach)).